We begin with the raw amino-acid sequence, 698 residues long: Serotransferrin (698 aa).

The signal sequence occupies residues 1–19; it reads MRFAVGALLACAALGLCLA. 2 Transferrin-like domains span residues 25-347 and 360-683; these read VKWC…NQRE and VKWC…NIRK. 2 disulfides stabilise this stretch: cysteine 28/cysteine 67 and cysteine 38/cysteine 58. The residue at position 42 (arginine 42) is a Dimethylated arginine. Fe(3+)-binding residues include aspartate 82 and tyrosine 114. Disulfide bonds link cysteine 137-cysteine 213, cysteine 156-cysteine 350, cysteine 177-cysteine 193, cysteine 180-cysteine 196, cysteine 190-cysteine 198, cysteine 246-cysteine 260, cysteine 363-cysteine 395, and cysteine 373-cysteine 386. 4 residues coordinate hydrogencarbonate: threonine 139, arginine 143, alanine 145, and glycine 146. Tyrosine 207 is a binding site for Fe(3+). Position 268 (histidine 268) interacts with Fe(3+). Serine 388 is modified (phosphoserine). Residues aspartate 410 and tyrosine 447 each coordinate Fe(3+). Disulfide bonds link cysteine 420/cysteine 693, cysteine 435/cysteine 656, cysteine 471/cysteine 542, cysteine 495/cysteine 684, cysteine 505/cysteine 519, cysteine 516/cysteine 525, cysteine 582/cysteine 596, and cysteine 634/cysteine 639. Residues threonine 473, arginine 477, alanine 479, and glycine 480 each coordinate hydrogencarbonate. N-linked (GlcNAc...) asparagine glycosylation occurs at asparagine 512. Position 536 (tyrosine 536) interacts with Fe(3+). Histidine 604 lines the Fe(3+) pocket. Serine 685 carries the phosphoserine modification.

It belongs to the transferrin family. In terms of assembly, monomer. Part of a complex composed of SLC40A1/ferroportin, TF/transferrin and HEPH/hephaestin that transfers iron from cells to transferrin. As to expression, expressed by the liver and secreted in plasma.

The protein resides in the secreted. Functionally, transferrins are iron binding transport proteins which can bind two Fe(3+) ions in association with the binding of an anion, usually bicarbonate. It is responsible for the transport of iron from sites of absorption and heme degradation to those of storage and utilization. Serum transferrin may also have a further role in stimulating cell proliferation. The sequence is that of Serotransferrin (Tf) from Rattus norvegicus (Rat).